The chain runs to 101 residues: Urease subunit beta (101 aa).

Belongs to the urease beta subunit family. In terms of assembly, heterotrimer of UreA (gamma), UreB (beta) and UreC (alpha) subunits. Three heterotrimers associate to form the active enzyme.

The protein localises to the cytoplasm. The catalysed reaction is urea + 2 H2O + H(+) = hydrogencarbonate + 2 NH4(+). It participates in nitrogen metabolism; urea degradation; CO(2) and NH(3) from urea (urease route): step 1/1. The sequence is that of Urease subunit beta from Ruegeria pomeroyi (strain ATCC 700808 / DSM 15171 / DSS-3) (Silicibacter pomeroyi).